We begin with the raw amino-acid sequence, 956 residues long: uncharacterized protein (956 aa).

Transmembrane regions (helical) follow at residues 40–60 (SGIVNFCTFQWVGWLIHLPIV), 104–124 (FLLGIMNSPALVISISTTTIL), 137–157 (AILAFFGNFLSNWLVVVAVLF), 166–186 (WYFLTPFTYVGSVLFIWYLVY), 264–284 (YVIGLFVGGVFLGSVILSVLI), and 301–321 (FSLLLIMMTGASLPYYGFDYL). The disordered stretch occupies residues 580–609 (NHYGLPEALDSSLESEEENLDPEEDIDPEI). A compositionally biased stretch (acidic residues) spans 592–609 (LESEEENLDPEEDIDPEI). Positions 640 to 672 (KSVIQKQAAEKAEEERKAEEEKLLAVRNAKKKG) form a coiled coil.

It belongs to the ycf78 family.

The protein localises to the plastid. It is found in the chloroplast membrane. This is an uncharacterized protein from Nephroselmis olivacea (Green alga).